The chain runs to 873 residues: DNA helicase/primase complex-associated protein (873 aa).

A disordered region spans residues 394–422 (PPLPRDDGDGENNVVEVSSSTGGAHPPSD).

This sequence belongs to the herpesviridae HEPA family. Associates with the primase and the helicase to form the helicase-primase complex. Interacts with the origin-binding protein. Interacts with the polymerase catalytic subunit.

It is found in the host nucleus. In terms of biological role, component of the helicase/primase complex. Unwinds the DNA at the replication forks and generates single-stranded DNA for both leading and lagging strand synthesis. The primase synthesizes short RNA primers on the lagging strand that the polymerase presumably elongates using dNTPs. The primase-associated factor has no known catalytic activity in the complex and may serve to facilitate the formation of the replisome by directly interacting with the origin-binding protein and the polymerase. The polypeptide is DNA helicase/primase complex-associated protein (UL102) (Homo sapiens (Human)).